A 523-amino-acid chain; its full sequence is Ubiquitin carboxyl-terminal hydrolase 22-B (523 aa).

The segment at 4–121 adopts a UBP-type zinc-finger fold; sequence AGCSHVNSFK…KEEQRKAWKL (118 aa). Residues cysteine 6, histidine 8, cysteine 46, cysteine 49, cysteine 59, cysteine 62, cysteine 67, histidine 72, histidine 76, histidine 82, cysteine 95, and cysteine 98 each coordinate Zn(2+). The USP domain occupies 174-518; that stretch reads RGLINLGNTC…EGYLLFYHKQ (345 aa). Residue cysteine 183 is the Nucleophile of the active site. The active-site Proton acceptor is histidine 477.

It belongs to the peptidase C19 family. UBP8 subfamily. In terms of assembly, component of some SAGA transcription coactivator-HAT complexes.

It localises to the nucleus. The catalysed reaction is Thiol-dependent hydrolysis of ester, thioester, amide, peptide and isopeptide bonds formed by the C-terminal Gly of ubiquitin (a 76-residue protein attached to proteins as an intracellular targeting signal).. Histone deubiquitinating component of the transcription regulatory histone acetylation (HAT) complex SAGA. Catalyzes the deubiquitination of both histones H2A and H2B, thereby acting as a coactivator. Recruited to specific gene promoters by activators, where it is required for transcription. The polypeptide is Ubiquitin carboxyl-terminal hydrolase 22-B (usp22-b) (Xenopus laevis (African clawed frog)).